We begin with the raw amino-acid sequence, 128 residues long: Probable heavy metal-dependent transcriptional regulator HI_0293 (128 aa).

One can recognise an HTH merR-type domain in the interval 1–69; that stretch reads MNISEAAKLV…LHQIAQLLAL (69 aa). Positions 4 to 23 form a DNA-binding region, H-T-H motif; sequence SEAAKLVGLSTKQIRDYEKM.

It localises to the cytoplasm. In terms of biological role, could be a copper-dependent transcriptional activator of the ATPase HI_0290. In Haemophilus influenzae (strain ATCC 51907 / DSM 11121 / KW20 / Rd), this protein is Probable heavy metal-dependent transcriptional regulator HI_0293.